A 385-amino-acid polypeptide reads, in one-letter code: tRNA-specific 2-thiouridylase MnmA (385 aa).

Residues 18-25 (AMSGGVDS) and Leu44 contribute to the ATP site. Cys112 serves as the catalytic Nucleophile. The cysteines at positions 112 and 209 are disulfide-linked. Gly136 is an ATP binding site. Positions 159–161 (RDQ) are interaction with tRNA. Cys209 acts as the Cysteine persulfide intermediate in catalysis.

This sequence belongs to the MnmA/TRMU family.

Its subcellular location is the cytoplasm. The catalysed reaction is S-sulfanyl-L-cysteinyl-[protein] + uridine(34) in tRNA + AH2 + ATP = 2-thiouridine(34) in tRNA + L-cysteinyl-[protein] + A + AMP + diphosphate + H(+). Catalyzes the 2-thiolation of uridine at the wobble position (U34) of tRNA, leading to the formation of s(2)U34. The chain is tRNA-specific 2-thiouridylase MnmA from Methylorubrum populi (strain ATCC BAA-705 / NCIMB 13946 / BJ001) (Methylobacterium populi).